The primary structure comprises 91 residues: Tachykinin-like peptide (91 aa).

The first 19 residues, 1-19, serve as a signal peptide directing secretion; it reads MKILVAFAVIMLVSAQVLA. A propeptide spanning residues 20–51 is cleaved from the precursor; it reads AEIGLNDEPEWYSDQIQEDLPVFENFLQRIAR. The residue at position 62 (Met-62) is a Methionine amide. Residues 64–91 form a disordered region; sequence KRNNGFGQMSRKRSAERNTIHNYERRRK. Residues 66–91 constitute a propeptide that is removed on maturation; it reads NNGFGQMSRKRSAERNTIHNYERRRK. Basic and acidic residues predominate over residues 76–91; sequence RSAERNTIHNYERRRK.

In terms of tissue distribution, expressed by the skin glands.

Its subcellular location is the secreted. Its function is as follows. Tachykinins are active peptides which excite neurons, evoke behavioral responses, are potent vasodilators and secretagogues, and contract (directly or indirectly) many smooth muscles. In vitro, induces contraction of guinea pig ileum smooth muscle in a dose-dependent manner. In Theloderma corticale (Kwangsi warty tree frog), this protein is Tachykinin-like peptide.